The primary structure comprises 301 residues: Probable alpha-L-glutamate ligase (301 aa).

The 184-residue stretch at 104-287 (LQLLSRKGIG…IAGLIVAYME (184 aa)) folds into the ATP-grasp domain. Residues Lys141, 178-179 (EF), Asp187, and 211-213 (RSN) each bind ATP. Residues Asp248, Glu260, and Asn262 each coordinate Mg(2+). 3 residues coordinate Mn(2+): Asp248, Glu260, and Asn262.

Belongs to the RimK family. It depends on Mg(2+) as a cofactor. The cofactor is Mn(2+).

This is Probable alpha-L-glutamate ligase from Cellvibrio japonicus (strain Ueda107) (Pseudomonas fluorescens subsp. cellulosa).